The primary structure comprises 336 residues: Tetraacyldisaccharide 4'-kinase (336 aa).

60–67 contacts ATP; the sequence is TVGGTGKT.

It belongs to the LpxK family.

It carries out the reaction a lipid A disaccharide + ATP = a lipid IVA + ADP + H(+). It functions in the pathway glycolipid biosynthesis; lipid IV(A) biosynthesis; lipid IV(A) from (3R)-3-hydroxytetradecanoyl-[acyl-carrier-protein] and UDP-N-acetyl-alpha-D-glucosamine: step 6/6. In terms of biological role, transfers the gamma-phosphate of ATP to the 4'-position of a tetraacyldisaccharide 1-phosphate intermediate (termed DS-1-P) to form tetraacyldisaccharide 1,4'-bis-phosphate (lipid IVA). The chain is Tetraacyldisaccharide 4'-kinase from Pseudomonas entomophila (strain L48).